The chain runs to 615 residues: uncharacterized protein (615 aa).

Belongs to the mycobacterial PPE family.

This is an uncharacterized protein from Mycobacterium tuberculosis (strain CDC 1551 / Oshkosh).